The chain runs to 175 residues: MSVKPLIILPDPVLRQVSKPVERFDDQLRKFASDMFDTMYDAPGIGLAAIQVGEPIRMLVIDLAKEGEPKAPHIFVNPTIVQSSDKRSTYEEGCLSIPDYYAEVERPATVKVNYFDADGKPQSMEADGLMATCLQHEIDHLNGVLFIDHISKLKRDMVIKKFKKLASQRASKKVL.

Positions 94 and 136 each coordinate Fe cation. Residue glutamate 137 is part of the active site. Histidine 140 contacts Fe cation.

Belongs to the polypeptide deformylase family. It depends on Fe(2+) as a cofactor.

It carries out the reaction N-terminal N-formyl-L-methionyl-[peptide] + H2O = N-terminal L-methionyl-[peptide] + formate. Its function is as follows. Removes the formyl group from the N-terminal Met of newly synthesized proteins. Requires at least a dipeptide for an efficient rate of reaction. N-terminal L-methionine is a prerequisite for activity but the enzyme has broad specificity at other positions. The sequence is that of Peptide deformylase from Brucella suis biovar 1 (strain 1330).